A 560-amino-acid chain; its full sequence is Arginine--tRNA ligase (560 aa).

The 'HIGH' region signature appears at 121–131; it reads PNIAKPFSMGH.

The protein belongs to the class-I aminoacyl-tRNA synthetase family. As to quaternary structure, monomer.

The protein localises to the cytoplasm. The enzyme catalyses tRNA(Arg) + L-arginine + ATP = L-arginyl-tRNA(Arg) + AMP + diphosphate. The sequence is that of Arginine--tRNA ligase from Exiguobacterium sibiricum (strain DSM 17290 / CCUG 55495 / CIP 109462 / JCM 13490 / 255-15).